We begin with the raw amino-acid sequence, 919 residues long: Phosphoenolpyruvate carboxylase (919 aa).

Active-site residues include histidine 138 and lysine 579.

This sequence belongs to the PEPCase type 1 family. Requires Mg(2+) as cofactor.

It catalyses the reaction oxaloacetate + phosphate = phosphoenolpyruvate + hydrogencarbonate. Forms oxaloacetate, a four-carbon dicarboxylic acid source for the tricarboxylic acid cycle. The chain is Phosphoenolpyruvate carboxylase from Corynebacterium glutamicum (Brevibacterium saccharolyticum).